We begin with the raw amino-acid sequence, 177 residues long: Bifunctional protein PyrR (177 aa).

Residues 98–110 (IILVDDVIYTGRT) carry the PRPP-binding motif.

The protein belongs to the purine/pyrimidine phosphoribosyltransferase family. PyrR subfamily. As to quaternary structure, homodimer and homohexamer; in equilibrium.

It carries out the reaction UMP + diphosphate = 5-phospho-alpha-D-ribose 1-diphosphate + uracil. Regulates transcriptional attenuation of the pyrimidine nucleotide (pyr) operon by binding in a uridine-dependent manner to specific sites on pyr mRNA. This disrupts an antiterminator hairpin in the RNA and favors formation of a downstream transcription terminator, leading to a reduced expression of downstream genes. In terms of biological role, also displays a weak uracil phosphoribosyltransferase activity which is not physiologically significant. The chain is Bifunctional protein PyrR from Clostridium kluyveri (strain ATCC 8527 / DSM 555 / NBRC 12016 / NCIMB 10680 / K1).